The sequence spans 470 residues: Cell division protein FtsA (470 aa).

The disordered stretch occupies residues 416 to 470 (NKKDTHENEVESTDEEIYQSEDNHQEHKQNHEHVQDKDKDKEESKFKKLMKSLFE). Residues 425 to 434 (VESTDEEIYQ) are compositionally biased toward acidic residues. Positions 436–461 (EDNHQEHKQNHEHVQDKDKDKEESKF) are enriched in basic and acidic residues.

The protein belongs to the FtsA/MreB family. In terms of assembly, self-interacts. Interacts with FtsZ.

The protein localises to the cell membrane. In terms of biological role, cell division protein that is involved in the assembly of the Z ring. May serve as a membrane anchor for the Z ring. The polypeptide is Cell division protein FtsA (Staphylococcus aureus (strain MSSA476)).